The following is a 721-amino-acid chain: ATP-dependent zinc metalloprotease FtsH (721 aa).

Residues Met1–Arg44 lie on the Cytoplasmic side of the membrane. Residues Ile45 to Phe65 form a helical membrane-spanning segment. Residues Ser66–Pro190 are Extracellular-facing. Residues Gln191–Leu211 traverse the membrane as a helical segment. At Arg212–Asn721 the chain is on the cytoplasmic side. Gly279–Thr286 is a binding site for ATP. Residue His498 coordinates Zn(2+). Residue Glu499 is part of the active site. Residues His502 and Asp577 each contribute to the Zn(2+) site. Residues Asn686–Asn721 form a disordered region. Over residues Glu700 to Asn721 the composition is skewed to basic and acidic residues.

The protein in the central section; belongs to the AAA ATPase family. In the C-terminal section; belongs to the peptidase M41 family. Homohexamer. Requires Zn(2+) as cofactor.

It is found in the cell membrane. In terms of biological role, acts as a processive, ATP-dependent zinc metallopeptidase for both cytoplasmic and membrane proteins. Plays a role in the quality control of integral membrane proteins. In Ureaplasma parvum serovar 3 (strain ATCC 27815 / 27 / NCTC 11736), this protein is ATP-dependent zinc metalloprotease FtsH.